The chain runs to 238 residues: Auxin-responsive protein IAA2 (238 aa).

The EAR-like (transcriptional repression) signature appears at 24-28 (LCLGL). Low complexity-rich tracts occupy residues 33-44 (SSSSSSKPSEGS), 59-69 (ASKPSGAAAAA), and 85-94 (ASSSSSSSKQ). Disordered stretches follow at residues 33 to 69 (SSSS…AAAA) and 82 to 114 (RNLA…KDGG). The 99-residue stretch at 118 to 216 (GMFVKINMDG…TAKRLRVLKS (99 aa)) folds into the PB1 domain. The disordered stretch occupies residues 217–238 (SDLPPPSLMRAAGSRKRAAADS). Over residues 229 to 238 (GSRKRAAADS) the composition is skewed to basic residues.

This sequence belongs to the Aux/IAA family. In terms of assembly, homodimers and heterodimers. In terms of tissue distribution, highly expressed in flowers.

The protein localises to the nucleus. Its function is as follows. Aux/IAA proteins are short-lived transcriptional factors that function as repressors of early auxin response genes at low auxin concentrations. The polypeptide is Auxin-responsive protein IAA2 (IAA2) (Oryza sativa subsp. japonica (Rice)).